A 152-amino-acid polypeptide reads, in one-letter code: uncharacterized protein (152 aa).

The Cytoplasmic segment spans residues 1–5 (MWFPQ). The chain crosses the membrane as a helical span at residues 6 to 26 (IIAGMAAGGAASAMTPGKVLF). Over 27–38 (TNALGLGCSRSR) the chain is Extracellular. The chain crosses the membrane as a helical span at residues 39 to 59 (GLFLEMFGTAVLCLTVLMTAV). Over 60 to 65 (EKRETN) the chain is Cytoplasmic. The helical transmembrane segment at 66–86 (FMAALPIGISLFMAHMALTGY) threads the bilayer. The Extracellular segment spans residues 87 to 110 (TGTGVNPARSLGAAVAARYFPHYH). The short motif at 92-94 (NPA) is the NPA element. The helical transmembrane segment at 111–131 (WIYWISPLLGAFLAWSVWQLL) threads the bilayer. Residues 132-152 (QILDYTTYVNAEKAAGQKKED) lie on the Cytoplasmic side of the membrane.

It belongs to the MIP/aquaporin (TC 1.A.8) family.

It localises to the membrane. This is an uncharacterized protein from Saccharomyces cerevisiae (strain RM11-1a) (Baker's yeast).